The sequence spans 321 residues: Glucokinase (321 aa).

8-13 is a binding site for ATP; the sequence is GDVGGT.

The protein belongs to the bacterial glucokinase family.

The protein localises to the cytoplasm. The catalysed reaction is D-glucose + ATP = D-glucose 6-phosphate + ADP + H(+). The protein is Glucokinase of Shigella dysenteriae serotype 1 (strain Sd197).